The sequence spans 293 residues: Probable adenylate kinase 1, chloroplastic (293 aa).

A mitochondrion-targeting transit peptide spans 1–26; sequence MAAVQRLLRASASGGAAAAAAAARRR. 70–75 is a binding site for ATP; sequence GVGKGT. Residues 90–119 form an NMP region; the sequence is ATGDLVRDELASSGPLSVQLAEIVNQGKLV. AMP is bound by residues Thr-91, Arg-96, 117-119, 147-150, and Gln-154; these read KLV and GFPR. Positions 183–231 are LID; that stretch reads GRRICGQCGKNFNLACIDVKGENGLPPIYMAPLLPPNNCMSKLITRADD. ATP is bound by residues Arg-184 and 193–194; that span reads NF. AMP contacts are provided by Arg-228 and Arg-239.

The protein belongs to the adenylate kinase family.

It localises to the mitochondrion. The catalysed reaction is AMP + ATP = 2 ADP. Its function is as follows. Catalyzes the reversible transfer of the terminal phosphate group between ATP and AMP. Plays an important role in cellular energy homeostasis and in adenine nucleotide metabolism. The polypeptide is Probable adenylate kinase 1, chloroplastic (Oryza sativa subsp. japonica (Rice)).